We begin with the raw amino-acid sequence, 359 residues long: DNA polymerase IV (359 aa).

The UmuC domain maps to 4–185; sequence IIHIDMDCYF…LSLRKIPGVG (182 aa). Residues Asp8 and Asp103 each coordinate Mg(2+). The active site involves Glu104.

This sequence belongs to the DNA polymerase type-Y family. In terms of assembly, monomer. Requires Mg(2+) as cofactor.

Its subcellular location is the cytoplasm. It carries out the reaction DNA(n) + a 2'-deoxyribonucleoside 5'-triphosphate = DNA(n+1) + diphosphate. In terms of biological role, poorly processive, error-prone DNA polymerase involved in untargeted mutagenesis. Copies undamaged DNA at stalled replication forks, which arise in vivo from mismatched or misaligned primer ends. These misaligned primers can be extended by PolIV. Exhibits no 3'-5' exonuclease (proofreading) activity. May be involved in translesional synthesis, in conjunction with the beta clamp from PolIII. This Shewanella sp. (strain ANA-3) protein is DNA polymerase IV.